The following is a 115-amino-acid chain: Phosphoribosyl-AMP cyclohydrolase (115 aa).

A Mg(2+)-binding site is contributed by aspartate 80. Cysteine 81 contributes to the Zn(2+) binding site. Residues aspartate 82 and aspartate 84 each contribute to the Mg(2+) site. Zn(2+) contacts are provided by cysteine 97 and cysteine 104.

Belongs to the PRA-CH family. In terms of assembly, homodimer. Mg(2+) serves as cofactor. The cofactor is Zn(2+).

It is found in the cytoplasm. The catalysed reaction is 1-(5-phospho-beta-D-ribosyl)-5'-AMP + H2O = 1-(5-phospho-beta-D-ribosyl)-5-[(5-phospho-beta-D-ribosylamino)methylideneamino]imidazole-4-carboxamide. It functions in the pathway amino-acid biosynthesis; L-histidine biosynthesis; L-histidine from 5-phospho-alpha-D-ribose 1-diphosphate: step 3/9. In terms of biological role, catalyzes the hydrolysis of the adenine ring of phosphoribosyl-AMP. The sequence is that of Phosphoribosyl-AMP cyclohydrolase from Mycolicibacterium gilvum (strain PYR-GCK) (Mycobacterium gilvum (strain PYR-GCK)).